We begin with the raw amino-acid sequence, 315 residues long: Acetyl-coenzyme A carboxylase carboxyl transferase subunit alpha (315 aa).

The CoA carboxyltransferase C-terminal domain maps to 40-293 (LQDKSKTLTE…REELSSQLAM (254 aa)).

It belongs to the AccA family. As to quaternary structure, acetyl-CoA carboxylase is a heterohexamer composed of biotin carboxyl carrier protein (AccB), biotin carboxylase (AccC) and two subunits each of ACCase subunit alpha (AccA) and ACCase subunit beta (AccD).

It localises to the cytoplasm. It catalyses the reaction N(6)-carboxybiotinyl-L-lysyl-[protein] + acetyl-CoA = N(6)-biotinyl-L-lysyl-[protein] + malonyl-CoA. Its pathway is lipid metabolism; malonyl-CoA biosynthesis; malonyl-CoA from acetyl-CoA: step 1/1. Its function is as follows. Component of the acetyl coenzyme A carboxylase (ACC) complex. First, biotin carboxylase catalyzes the carboxylation of biotin on its carrier protein (BCCP) and then the CO(2) group is transferred by the carboxyltransferase to acetyl-CoA to form malonyl-CoA. This is Acetyl-coenzyme A carboxylase carboxyl transferase subunit alpha from Pseudomonas syringae pv. tomato (strain ATCC BAA-871 / DC3000).